The primary structure comprises 813 residues: Microtubule-associated protein 6 (813 aa).

S-palmitoyl cysteine attachment occurs at residues C5, C10, and C11. Disordered regions lie at residues 36–283 (ATEH…AAAD), 314–651 (VKPI…KDES), and 756–813 (PLKD…ESSP). A compositionally biased stretch (pro residues) spans 41–50 (GAPPQPPPPQ). Positions 51 to 62 (QQAQPALAPPSA) are enriched in low complexity. Positions 100–112 (GRSGPGPGLGSGS) are enriched in gly residues. Residue S102 is modified to Phosphoserine. A mn 1 region spans residues 118 to 141 (DSVMRQDYRAWKVQRPEPSCRPRS). Over residues 121–141 (MRQDYRAWKVQRPEPSCRPRS) the composition is skewed to basic and acidic residues. The tract at residues 126–140 (RAWKVQRPEPSCRPR) is calmodulin-binding. Y143 carries the phosphotyrosine modification. The segment covering 149 to 173 (PFERETQYQKDFRAWPLPRRGDHPW) has biased composition (basic and acidic residues). The segment at 153 to 176 (ETQYQKDFRAWPLPRRGDHPWIPK) is mn 2. Residues 162–176 (AWPLPRRGDHPWIPK) are calmodulin-binding. S187 carries the post-translational modification Phosphoserine. 4 calmodulin-binding regions span residues 189–203 (PILG…SQER), 306–320 (RAWT…IKAK), 357–371 (RRRI…FKEP), and 384–398 (PKKT…RKAK). The mn 3 stretch occupies residues 298-321 (SSSYRNEFRAWTDIKPVKPIKAKP). A compositionally biased stretch (basic and acidic residues) spans 367-376 (PFKEPPKVEK). Basic residues predominate over residues 383–398 (KPKKTSASHKPTRKAK). Positions 420-439 (KPDDKEQSKEMNNKLAEAKE) are enriched in basic and acidic residues. The span at 443–454 (QPVSDSSKTQGP) shows a compositional bias: polar residues. A compositionally biased stretch (basic and acidic residues) spans 637–651 (KDQDPMVPEHPKDES). Residue S812 is modified to Phosphoserine.

It belongs to the STOP family. As to quaternary structure, interacts with calmodulin (via C-terminus); the interaction is dependent on Ca(2+). Interacts (via C-terminus) with TMEM106B (via N-terminus). Interacts with ZDHHC17 (via ANK repeats). Interacts with ZDHHC13 (via ANK repeats). Palmitoylated. Probably depalmitoylated by ABHD17A, ABHD17B and ABHD17C. During neuronal polarization, palmitoylation and depalmitoylation cycles regulate MAP6 shuttling between secretory vesicles and microtubules, and its polarized distribution in the axon. In terms of tissue distribution, expressed in brain (at protein level). Expressed in spinal cord. Isoform 2 expression is up-regulated in the prefrontal cortex (Brodmann's area 46) of patients with schizophrenia (postmortem brain study).

It localises to the cytoplasm. The protein localises to the cytoskeleton. The protein resides in the golgi apparatus. Its subcellular location is the cell projection. It is found in the axon. It localises to the dendrite. The protein localises to the cytoplasmic vesicle. The protein resides in the secretory vesicle membrane. Its function is as follows. Involved in microtubule stabilization in many cell types, including neuronal cells. Specifically has microtubule cold stabilizing activity. Involved in dendrite morphogenesis and maintenance by regulating lysosomal trafficking via its interaction with TMEM106B. Regulates KIF5A-mediated axonal cargo transport. Regulates axonal growth during neuron polarization. The protein is Microtubule-associated protein 6 (MAP6) of Homo sapiens (Human).